The chain runs to 146 residues: Hemoglobin subunit beta (146 aa).

Residues H2–H146 enclose the Globin domain. Residues H63 and H92 each contribute to the heme b site.

The protein belongs to the globin family. In terms of assembly, heterotetramer of two alpha chains and two beta chains. In terms of tissue distribution, red blood cells.

Its function is as follows. Involved in oxygen transport from the lung to the various peripheral tissues. This chain is Hemoglobin subunit beta (HBB), found in Psittacula krameri (Rose-ringed parakeet).